A 130-amino-acid polypeptide reads, in one-letter code: Tripartite terminase subunit 2 (130 aa).

This sequence belongs to the herpesviridae TRM2 protein family. Associates with TRM1 and TRM3 to form the tripartite terminase complex.

The protein resides in the host nucleus. Component of the molecular motor that translocates viral genomic DNA in empty capsid during DNA packaging. Forms a tripartite terminase complex together with TRM1 and TRM3 in the host cytoplasm. Once the complex reaches the host nucleus, it interacts with the capsid portal vertex. This portal forms a ring in which genomic DNA is translocated into the capsid. The sequence is that of Tripartite terminase subunit 2 from Homo sapiens (Human).